The sequence spans 195 residues: GTP-dependent dephospho-CoA kinase (195 aa).

5 residues coordinate GTP: D49, V50, D68, E127, and D150.

This sequence belongs to the GTP-dependent DPCK family.

The enzyme catalyses 3'-dephospho-CoA + GTP = GDP + CoA + H(+). Its pathway is cofactor biosynthesis; coenzyme A biosynthesis. In terms of biological role, catalyzes the GTP-dependent phosphorylation of the 3'-hydroxyl group of dephosphocoenzyme A to form coenzyme A (CoA). This is GTP-dependent dephospho-CoA kinase from Methanosarcina acetivorans (strain ATCC 35395 / DSM 2834 / JCM 12185 / C2A).